The primary structure comprises 140 residues: MAVTRTFSIIKPDATKRNLTGAVTKMLEEAGLRVVASKRIRMSREQAEGFYAVHKERPFFGELVDFMMSEPVVVQVLEGEDAVKRNRDVMGATNPAEAAEGTIRKEYALSIGENTVHGSDSEENAKIEIDFFFDEDEIVG.

ATP is bound by residues lysine 11, phenylalanine 59, arginine 87, threonine 93, arginine 104, and asparagine 114. The active-site Pros-phosphohistidine intermediate is the histidine 117.

This sequence belongs to the NDK family. Homotetramer. Mg(2+) serves as cofactor.

Its subcellular location is the cytoplasm. The enzyme catalyses a 2'-deoxyribonucleoside 5'-diphosphate + ATP = a 2'-deoxyribonucleoside 5'-triphosphate + ADP. It catalyses the reaction a ribonucleoside 5'-diphosphate + ATP = a ribonucleoside 5'-triphosphate + ADP. Functionally, major role in the synthesis of nucleoside triphosphates other than ATP. The ATP gamma phosphate is transferred to the NDP beta phosphate via a ping-pong mechanism, using a phosphorylated active-site intermediate. This chain is Nucleoside diphosphate kinase, found in Erythrobacter litoralis (strain HTCC2594).